Reading from the N-terminus, the 172-residue chain is Large ribosomal subunit protein bL17 (172 aa).

Residues alanine 123–lysine 172 are disordered. Positions glutamate 132–alanine 143 are enriched in low complexity.

The protein belongs to the bacterial ribosomal protein bL17 family. In terms of assembly, part of the 50S ribosomal subunit. Contacts protein L32.

The chain is Large ribosomal subunit protein bL17 from Thermobifida fusca (strain YX).